The following is a 277-amino-acid chain: NADPH-dependent 7-cyano-7-deazaguanine reductase (277 aa).

Residue 86–88 (IES) participates in substrate binding. Residue 88 to 89 (SK) coordinates NADPH. Cysteine 184 serves as the catalytic Thioimide intermediate. The active-site Proton donor is the aspartate 191. Substrate is bound at residue 223-224 (HE). 252–253 (RG) is an NADPH binding site.

The protein belongs to the GTP cyclohydrolase I family. QueF type 2 subfamily. In terms of assembly, homodimer.

The protein localises to the cytoplasm. It catalyses the reaction 7-aminomethyl-7-carbaguanine + 2 NADP(+) = 7-cyano-7-deazaguanine + 2 NADPH + 3 H(+). It participates in tRNA modification; tRNA-queuosine biosynthesis. Functionally, catalyzes the NADPH-dependent reduction of 7-cyano-7-deazaguanine (preQ0) to 7-aminomethyl-7-deazaguanine (preQ1). This Chromohalobacter salexigens (strain ATCC BAA-138 / DSM 3043 / CIP 106854 / NCIMB 13768 / 1H11) protein is NADPH-dependent 7-cyano-7-deazaguanine reductase.